Reading from the N-terminus, the 440-residue chain is Chromosome partition protein MukF (440 aa).

The interval 208-236 is leucine-zipper; it reads LSETSGTLRELQDTLEAAGDKLQANLLRI.

Belongs to the MukF family. Interacts, and probably forms a ternary complex, with MukE and MukB via its C-terminal region. The complex formation is stimulated by calcium or magnesium. It is required for an interaction between MukE and MukB.

The protein localises to the cytoplasm. Its subcellular location is the nucleoid. In terms of biological role, involved in chromosome condensation, segregation and cell cycle progression. May participate in facilitating chromosome segregation by condensation DNA from both sides of a centrally located replisome during cell division. Not required for mini-F plasmid partitioning. Probably acts via its interaction with MukB and MukE. Overexpression results in anucleate cells. It has a calcium binding activity. The protein is Chromosome partition protein MukF of Escherichia coli O157:H7.